A 154-amino-acid polypeptide reads, in one-letter code: SsrA-binding protein (154 aa).

The protein belongs to the SmpB family.

Its subcellular location is the cytoplasm. Required for rescue of stalled ribosomes mediated by trans-translation. Binds to transfer-messenger RNA (tmRNA), required for stable association of tmRNA with ribosomes. tmRNA and SmpB together mimic tRNA shape, replacing the anticodon stem-loop with SmpB. tmRNA is encoded by the ssrA gene; the 2 termini fold to resemble tRNA(Ala) and it encodes a 'tag peptide', a short internal open reading frame. During trans-translation Ala-aminoacylated tmRNA acts like a tRNA, entering the A-site of stalled ribosomes, displacing the stalled mRNA. The ribosome then switches to translate the ORF on the tmRNA; the nascent peptide is terminated with the 'tag peptide' encoded by the tmRNA and targeted for degradation. The ribosome is freed to recommence translation, which seems to be the essential function of trans-translation. The protein is SsrA-binding protein of Acetivibrio thermocellus (strain ATCC 27405 / DSM 1237 / JCM 9322 / NBRC 103400 / NCIMB 10682 / NRRL B-4536 / VPI 7372) (Clostridium thermocellum).